Here is a 331-residue protein sequence, read N- to C-terminus: Bifunctional nuclease 1 (331 aa).

Residues 126-261 enclose the BFN domain; the sequence is CVQNNPRVLR…RIAYNNGLKV (136 aa). The 36-residue stretch at 291-326 folds into the UVR domain; the sequence is EAQEFDLVRNMLVAAVEERYKDAAQYRDQLFMFRAK.

Belongs to the bifunctional nuclease family.

It localises to the nucleus. In terms of biological role, bifunctional nuclease with both RNase and DNase activities. Involved in basal defense response. Participates in abscisic acid-derived callose deposition following infection by a necrotrophic pathogen. The sequence is that of Bifunctional nuclease 1 (BBD1) from Oryza sativa subsp. indica (Rice).